We begin with the raw amino-acid sequence, 534 residues long: Sodium-dependent lysophosphatidylcholine symporter 1 (534 aa).

The Cytoplasmic segment spans residues 1–39 (MAKGEGAESGSAAGLLPTSILQASERPVQVKKEPKKKQQ). A helical membrane pass occupies residues 40–69 (LSICNKLCYAVGGAPYQLTGCALGFFLQIY). The Extracellular portion of the chain corresponds to 70 to 80 (LLDVAKVEPLP). Residues 81-101 (ASIILFVGRAWDAFTDPLVGF) traverse the membrane as a helical segment. At 102–113 (CISKSSWTRLGR) the chain is on the cytoplasmic side. Residues 114-133 (LMPWIIFSTPLAIIAYFLIW) traverse the membrane as a helical segment. The Extracellular segment spans residues 134 to 148 (FVPDFPSGTESSHGF). The chain crosses the membrane as a helical span at residues 149-173 (LWYLLFYCLFETLVTCFHVPYSALT). Over 174–180 (MFISTEQ) the chain is Cytoplasmic. Residues 181–212 (SERDSATAYRMTVEVLGTVIGTAIQGQIVGQA) form a helical membrane-spanning segment. Residues 213-232 (KAPCLQDQNGSVVVSEVANR) lie on the Extracellular side of the membrane. Cysteines 216 and 464 form a disulfide. N-linked (GlcNAc...) asparagine glycosylation is found at N221 and N231. The chain crosses the membrane as a helical span at residues 233–266 (TQSTASLKDTQNAYLLAAGIIASIYVLCAFILIL). Residues 267 to 297 (GVREQRELYESQQAESMPFFQGLRLVMGHGP) are Cytoplasmic-facing. A helical transmembrane segment spans residues 298-324 (YVKLIAGFLFTSLAFMLVEGNFALFCT). Topologically, residues 325–335 (YTLDFRNEFQN) are extracellular. A helical membrane pass occupies residues 336-354 (LLLAIMLSATFTIPIWQWF). Over 355 to 358 (LTRF) the chain is Cytoplasmic. A helical transmembrane segment spans residues 359–380 (GKKTAVYIGISSAVPFLILVAL). The Extracellular segment spans residues 381-383 (MER). Residues 384–420 (NLIVTYVVAVAAGVSVAAAFLLPWSMLPDVIDDFHLK) form a helical membrane-spanning segment. Residues 421-430 (HPHSPGTEPI) lie on the Cytoplasmic side of the membrane. A helical membrane pass occupies residues 431–457 (FFSFYVFFTKFASGVSLGVSTLSLDFA). Residues 458-469 (NYQRQGCSQPEQ) are Extracellular-facing. A helical membrane pass occupies residues 470 to 493 (VKFTLKMLVTMAPIILILLGLLLF). At 494 to 534 (KLYPIDEEKRRQNKKALQALREEASSSGCSDTDSTELASIL) the chain is on the cytoplasmic side.

The protein belongs to the major facilitator superfamily. Post-translationally, N-glycosylated. Widely expressed. Exhibits an oscillatory pattern of expression in brown adipose tissue and liver consistent with a circadian rhythm. Enriched in brain micro-vessels, where it is specifically present in endothelium constituting the blood-brain barrier (at protein level).

It is found in the cell membrane. The protein resides in the endoplasmic reticulum membrane. It carries out the reaction a 1-acyl-sn-glycero-3-phosphocholine(in) + Na(+)(in) = a 1-acyl-sn-glycero-3-phosphocholine(out) + Na(+)(out). The catalysed reaction is 1-(4Z,7Z,10Z,13Z,16Z,19Z-docosahexaenoyl)-sn-glycero-3-phosphocholine(in) + Na(+)(in) = 1-(4Z,7Z,10Z,13Z,16Z,19Z-docosahexaenoyl)-sn-glycero-3-phosphocholine(out) + Na(+)(out). The enzyme catalyses 1-(9Z-octadecenoyl)-sn-glycero-3-phosphocholine(in) + Na(+)(in) = 1-(9Z-octadecenoyl)-sn-glycero-3-phosphocholine(out) + Na(+)(out). It catalyses the reaction 1-hexadecanoyl-sn-glycero-3-phosphocholine(in) + Na(+)(in) = 1-hexadecanoyl-sn-glycero-3-phosphocholine(out) + Na(+)(out). It carries out the reaction a 1-acyl-sn-glycero-3-phosphoethanolamine(in) + Na(+)(in) = a 1-acyl-sn-glycero-3-phosphoethanolamine(out) + Na(+)(out). Its function is as follows. Sodium-dependent lysophosphatidylcholine (LPC) symporter, which plays an essential role for blood-brain barrier formation and function. Specifically expressed in endothelium of the blood-brain barrier of micro-vessels and transports LPC into the brain. Transport of LPC is essential because it constitutes the major mechanism by which docosahexaenoic acid (DHA), an omega-3 fatty acid that is essential for normal brain growth and cognitive function, enters the brain. Transports LPC carrying long-chain fatty acids such LPC oleate and LPC palmitate with a minimum acyl chain length of 14 carbons. Does not transport docosahexaenoic acid in unesterified fatty acid. Not required for central nervous system vascular morphogenesis. This chain is Sodium-dependent lysophosphatidylcholine symporter 1, found in Mus musculus (Mouse).